The chain runs to 139 residues: Tol-Pal system protein TolR (139 aa).

The helical transmembrane segment at 15–35 (IVPFLDVLLVLVLIFMATAPI) threads the bilayer.

Belongs to the ExbD/TolR family. In terms of assembly, the Tol-Pal system is composed of five core proteins: the inner membrane proteins TolA, TolQ and TolR, the periplasmic protein TolB and the outer membrane protein Pal. They form a network linking the inner and outer membranes and the peptidoglycan layer.

It localises to the cell inner membrane. In terms of biological role, part of the Tol-Pal system, which plays a role in outer membrane invagination during cell division and is important for maintaining outer membrane integrity. This chain is Tol-Pal system protein TolR, found in Haemophilus influenzae (strain ATCC 51907 / DSM 11121 / KW20 / Rd).